We begin with the raw amino-acid sequence, 289 residues long: UPF0276 protein BPP1075 (289 aa).

The protein belongs to the UPF0276 family.

The sequence is that of UPF0276 protein BPP1075 from Bordetella parapertussis (strain 12822 / ATCC BAA-587 / NCTC 13253).